Reading from the N-terminus, the 22-residue chain is Mu-conotoxin KIIIB (22 aa).

Positions 1 to 2 (KR) are excised as a propeptide. Cystine bridges form between Cys5-Cys13, Cys5-Cys19, Cys5-Cys20, Cys6-Cys13, Cys6-Cys19, Cys8-Cys19, and Cys8-Cys20. 2 pharmacophore key residues regions span residues 14–16 (RDH) and 18–19 (RC). The residue at position 20 (Cys20) is a Cysteine amide.

This sequence belongs to the conotoxin M superfamily. Monomer. In terms of processing, toxins with three different disulfide connectivities have been synthesized. The conotoxin mu-KIIIA-P1 shows the connectivity C1-C5, C2-C4, and C3-C6, whereas mu-KIIIA-P2 shows the connectivity C1-C6, C2-C4, and C3-C5. The conotoxin mu-KIIIA-N has the 'native' fold of the mu-conotoxin family (C1-C4, C2-C5, and C3-C6). Mu-KIIIA-P1 and mu-KIIIA-P2 are obtained by both thermodynamic oxidative folding and regioselective synthesis. Mu-KIIIA-P1 is the major oxidative folding product. Mu-KIIIA-N is only obtained by regioselective synthesis. Expressed by the venom duct.

It is found in the secreted. Mu-conotoxin KIIIA-P1: mu-conotoxins block voltage-gated sodium channels (Nav). This toxin potently blocks Nav1.2/SCN2A (IC(50)5-124 nM), Nav1.4/SCN4A (IC(50)=20-90 nM), and Nav1.7/SCN9A (IC(50)=290-413 nM). It moderately blocks Nav1.1/SCN1A, and mNav1.6/SCN8A. It also shows a very low activity on Nav1.3/SCN3A. This toxin binds a microsite within the pore different from the tetrodotoxin binding site 1 (tested on Nav1.2). The block is partial, with a residual current that can be completely blocked by TTX. The toxin probably docks at a more superficial site in the outer vestibule of the channel than does TTX. On rNav1.2/SCN2A, it produces a block that is only partially reversible. The block of Nav1.7 is modified when beta-subunits are coexpressed with the alpha subunit. Hence, blocks of channels containing beta-1 and beta-3 subunits are more potent (compared to channels without beta subunits), whereas blocks of channels containing beta-2 and beta-4 subunits are less potent (compared to channels without beta subunits). Functionally, mu-conotoxin KIIIA-P2: This toxin potently blocks Nav1.2/SCN2A (Kd=230 nM, IC(50)=1.37 uM) and Nav1.4/SCN4A (Kd=830 nM, IC(50)=2 uM). It also moderately blocks Nav1.7/SCN9A (Kd=1.57 uM, IC(50)=5.4 uM). In addition, this toxin may also inhibit other sodium channels, as does Mu-conotoxin KIIIA-P1. Its function is as follows. Mu-conotoxin KIIIA-N: This toxin moderately blocks Nav1.2/SCN2A (IC(50)=875 nM), Nav1.4/SCN4A (IC(50)=472 nM), and Nav1.7/SCN9A (IC(50)=887 nM). In terms of biological role, mu-conotoxin KIIIB-P1: This toxin potently blocks Nav1.2/SCN2A (Kd=470 nM). In addition, this toxin may also inhibit other sodium channels, as does Mu-conotoxin KIIIA-P1. Mu-conotoxin KIIIB-P2: This toxin potently blocks Nav1.2/SCN2A (Kd=26 nM). In addition, this toxin may also inhibit other sodium channels, as does Mu-conotoxin KIIIA-P1. In Conus kinoshitai (Kinoshita's cone), this protein is Mu-conotoxin KIIIB.